We begin with the raw amino-acid sequence, 272 residues long: Tryptophan synthase alpha chain (272 aa).

Active-site proton acceptor residues include Glu-49 and Glu-60.

It belongs to the TrpA family. As to quaternary structure, tetramer of two alpha and two beta chains.

It carries out the reaction (1S,2R)-1-C-(indol-3-yl)glycerol 3-phosphate + L-serine = D-glyceraldehyde 3-phosphate + L-tryptophan + H2O. Its pathway is amino-acid biosynthesis; L-tryptophan biosynthesis; L-tryptophan from chorismate: step 5/5. In terms of biological role, the alpha subunit is responsible for the aldol cleavage of indoleglycerol phosphate to indole and glyceraldehyde 3-phosphate. The polypeptide is Tryptophan synthase alpha chain (Legionella pneumophila (strain Paris)).